The following is a 185-amino-acid chain: Ribosome-recycling factor (185 aa).

Belongs to the RRF family.

The protein resides in the cytoplasm. Functionally, responsible for the release of ribosomes from messenger RNA at the termination of protein biosynthesis. May increase the efficiency of translation by recycling ribosomes from one round of translation to another. This is Ribosome-recycling factor from Salmonella paratyphi A (strain ATCC 9150 / SARB42).